A 429-amino-acid polypeptide reads, in one-letter code: Adenylosuccinate synthetase (429 aa).

GTP-binding positions include 12 to 18 (GDEGKGK) and 40 to 42 (GHT). Aspartate 13 serves as the catalytic Proton acceptor. The Mg(2+) site is built by aspartate 13 and glycine 40. IMP is bound by residues 13–16 (DEGK), 38–41 (NAGH), threonine 128, arginine 142, glutamine 223, threonine 238, and arginine 302. The active-site Proton donor is the histidine 41. Residue 298–304 (TVTGRPR) coordinates substrate. GTP-binding positions include arginine 304, 330-332 (LLD), and 412-414 (SVG).

This sequence belongs to the adenylosuccinate synthetase family. Homodimer. Mg(2+) is required as a cofactor.

Its subcellular location is the cytoplasm. It catalyses the reaction IMP + L-aspartate + GTP = N(6)-(1,2-dicarboxyethyl)-AMP + GDP + phosphate + 2 H(+). It functions in the pathway purine metabolism; AMP biosynthesis via de novo pathway; AMP from IMP: step 1/2. Its function is as follows. Plays an important role in the de novo pathway of purine nucleotide biosynthesis. Catalyzes the first committed step in the biosynthesis of AMP from IMP. The polypeptide is Adenylosuccinate synthetase (Lactobacillus acidophilus (strain ATCC 700396 / NCK56 / N2 / NCFM)).